The chain runs to 207 residues: 3-demethoxyubiquinol 3-hydroxylase (207 aa).

Positions 56, 86, 89, 138, 170, and 173 each coordinate Fe cation.

Belongs to the COQ7 family. Requires Fe cation as cofactor.

It localises to the cell membrane. It carries out the reaction a 5-methoxy-2-methyl-3-(all-trans-polyprenyl)benzene-1,4-diol + AH2 + O2 = a 3-demethylubiquinol + A + H2O. Its pathway is cofactor biosynthesis; ubiquinone biosynthesis. Functionally, catalyzes the hydroxylation of 2-nonaprenyl-3-methyl-6-methoxy-1,4-benzoquinol during ubiquinone biosynthesis. The sequence is that of 3-demethoxyubiquinol 3-hydroxylase from Cupriavidus necator (strain ATCC 17699 / DSM 428 / KCTC 22496 / NCIMB 10442 / H16 / Stanier 337) (Ralstonia eutropha).